Consider the following 331-residue polypeptide: Phenylalanine--tRNA ligase alpha subunit (331 aa).

Position 256 (glutamate 256) interacts with Mg(2+).

It belongs to the class-II aminoacyl-tRNA synthetase family. Phe-tRNA synthetase alpha subunit type 1 subfamily. As to quaternary structure, tetramer of two alpha and two beta subunits. Mg(2+) serves as cofactor.

It localises to the cytoplasm. It catalyses the reaction tRNA(Phe) + L-phenylalanine + ATP = L-phenylalanyl-tRNA(Phe) + AMP + diphosphate + H(+). The sequence is that of Phenylalanine--tRNA ligase alpha subunit from Colwellia psychrerythraea (strain 34H / ATCC BAA-681) (Vibrio psychroerythus).